The sequence spans 417 residues: Autophagy-related protein 18 (417 aa).

WD repeat units lie at residues 1–36 (MSMN…KSYE), 76–114 (ELTF…LVYT), 185–225 (AHKS…KLYQ), and 230–269 (SMPS…GLSK). Positions 226–230 (FRRGS) match the L/FRRG motif motif. Residues 267 to 300 (LSKTSSPSRKLESSRGSGDESAVESASSEMSSRK) form a disordered region. Low complexity predominate over residues 285–296 (DESAVESASSEM). 2 WD repeats span residues 300-346 (KHNG…AWIK) and 355-395 (GGSG…GGEG).

It belongs to the WD repeat PROPPIN family. As to quaternary structure, component of the PI(3,5)P2 regulatory complex.

The protein resides in the preautophagosomal structure membrane. It is found in the vacuole membrane. It localises to the endosome membrane. In terms of biological role, the PI(3,5)P2 regulatory complex regulates both the synthesis and turnover of phosphatidylinositol 3,5-bisphosphate (PtdIns(3,5)P2). Necessary for proper vacuole morphology. Plays an important role in osmotically-induced vacuole fragmentation. Required for cytoplasm to vacuole transport (Cvt) vesicle formation, pexophagy and starvation-induced autophagy. Involved in correct ATG9 trafficking to the pre-autophagosomal structure. Might also be involved in premeiotic DNA replication. This is Autophagy-related protein 18 (ATG18) from Coccidioides immitis (strain RS) (Valley fever fungus).